The chain runs to 314 residues: Small ribosomal subunit biogenesis GTPase RsgA (314 aa).

Residues 78–238 (SEIFREKLIA…IIDSPGFQEF (161 aa)) enclose the CP-type G domain. GTP contacts are provided by residues 127 to 130 (NKID) and 180 to 188 (GQSGVGKST). Zn(2+)-binding residues include cysteine 262, cysteine 267, histidine 269, and cysteine 275.

The protein belongs to the TRAFAC class YlqF/YawG GTPase family. RsgA subfamily. In terms of assembly, monomer. Associates with 30S ribosomal subunit, binds 16S rRNA. The cofactor is Zn(2+).

The protein localises to the cytoplasm. In terms of biological role, one of several proteins that assist in the late maturation steps of the functional core of the 30S ribosomal subunit. Helps release RbfA from mature subunits. May play a role in the assembly of ribosomal proteins into the subunit. Circularly permuted GTPase that catalyzes slow GTP hydrolysis, GTPase activity is stimulated by the 30S ribosomal subunit. This Nitrosomonas europaea (strain ATCC 19718 / CIP 103999 / KCTC 2705 / NBRC 14298) protein is Small ribosomal subunit biogenesis GTPase RsgA.